A 197-amino-acid chain; its full sequence is CASP-like protein 1B1 (197 aa).

A2 is subject to N-acetylalanine. Residues 2–17 (AVSKLTLAATSGKSCK) are Cytoplasmic-facing. A helical membrane pass occupies residues 18 to 38 (ILLGLRLLAFSATLSAAIVMG). Residues 39–69 (LNKETKTFIVGKVGNTPIQATFTAKFDHTPA) are Extracellular-facing. Residues 70–90 (FVFFVVANAMVSFHNLLMIAL) traverse the membrane as a helical segment. Topologically, residues 91-106 (QIFGGKMEFTGFRLLS) are cytoplasmic. The helical transmembrane segment at 107–127 (VAILDMLNVTLISAAANAAAF) threads the bilayer. The Extracellular segment spans residues 128 to 156 (MAEVGKNGNKHARWDKICDRFATYCDHGA). A helical transmembrane segment spans residues 157–177 (GALIAAFAGVILMLIISAASI). The Cytoplasmic portion of the chain corresponds to 178–197 (SRLVQPNKCCSTTASPSVVP).

Belongs to the Casparian strip membrane proteins (CASP) family. Homodimer and heterodimers.

The protein resides in the cell membrane. The polypeptide is CASP-like protein 1B1 (Arabidopsis thaliana (Mouse-ear cress)).